A 417-amino-acid polypeptide reads, in one-letter code: Putative transporter AmpG 1 (417 aa).

Transmembrane regions (helical) follow at residues 7–27 (LCIIWLFGLISGFNLMITGNT), 42–62 (IGILSFITLPYSINFLLAPIF), 78–98 (LSWICLTSSALIFLIYIFSFL), 104–124 (LLLFAFTALIISFFSAAQDTI), 143–163 (GIYIFGYRVGMLLAGSGAIYL), 171–191 (EIYKIFAGLVFIYLILLIVGI), 225–245 (ALKPIGSVYFIILILIFLVLY), 273–293 (VGKFCGVVGAIIGGLVGGVIM), 301–321 (SIFLFGIIHALGHILFIFLEI), 328–348 (LLFITIGIASITGGMTMTAYI), 366–386 (FLSSMMGISRSIFPIISGYMV), and 389–409 (FGWQNFFLFTTIITIPSLLIL).

It belongs to the major facilitator superfamily.

The protein localises to the cell inner membrane. This chain is Putative transporter AmpG 1 (ampG1), found in Rickettsia conorii (strain ATCC VR-613 / Malish 7).